A 211-amino-acid chain; its full sequence is uncharacterized protein (211 aa).

A disordered region spans residues 155-211 (AAENASEEGDKKQIITDSGKLPETEELTETTNEDLDIKQFSPYSSESSANVSSYNKS). Over residues 178-188 (TEELTETTNED) the composition is skewed to acidic residues. The span at 195–211 (SPYSSESSANVSSYNKS) shows a compositional bias: low complexity.

This is an uncharacterized protein from Schizosaccharomyces pombe (strain 972 / ATCC 24843) (Fission yeast).